We begin with the raw amino-acid sequence, 105 residues long: Circadian clock oscillator protein KaiB (105 aa).

It belongs to the KaiB family. As to quaternary structure, the KaiABC complex composition changes during the circadian cycle to control KaiC phosphorylation. Complexes KaiC(6), KaiA(2-4):KaiC(6), KaiB(6):KaiC(6) and KaiC(6):KaiB(6):KaiA(12) are among the most important forms, many form cooperatively. Undergoes a major conformational rearrangment; in the free state forms homotetramers as a dimer of dimers. When bound to the CI domain of KaiC switches to a monomeric thioredoxin-fold (KaiB(fs)). KaiB(fs) binds CikA, leading it to dephosphorylate phospho-RpaA.

In terms of biological role, key component of the KaiABC oscillator complex, which constitutes the main circadian regulator in cyanobacteria. Complex composition changes during the circadian cycle to control KaiC phosphorylation. KaiA stimulates KaiC autophosphorylation, while KaiB sequesters KaiA, leading to KaiC autodephosphorylation. Phospho-Ser-431 KaiC accumulation triggers binding of KaiB to form the KaiB(6):KaiC(6) complex, leading to changes in output regulators CikA and SasA. KaiB switches to a thioredoxin-like fold (KaiB(fs)) when bound to KaiC. KaiB(6):KaiC(6) formation exposes a site for KaiA binding that sequesters KaiA from KaiC, making the KaiC(6):KaiB(6):KaiA(12) complex that results in KaiC autodephosphorylation. Functionally, a metamorphic protein which reversibly switches between an inactive tetrameric fold and a rare, thioredoxin-like monomeric fold (KaiB(fs)). KaiB(fs) binds phospho-KaiC, KaiA and CikA. KaiA and CikA compete for binding to KaiB(fs), and KaiB(fs) and SasA compete for binding to KaiC, thus the clock oscillator and output signal pathway are tightly coupled. This chain is Circadian clock oscillator protein KaiB, found in Cyanothece sp. (strain PCC 7425 / ATCC 29141).